The primary structure comprises 236 residues: Phosphoribosylaminoimidazole-succinocarboxamide synthase (236 aa).

Belongs to the SAICAR synthetase family.

It catalyses the reaction 5-amino-1-(5-phospho-D-ribosyl)imidazole-4-carboxylate + L-aspartate + ATP = (2S)-2-[5-amino-1-(5-phospho-beta-D-ribosyl)imidazole-4-carboxamido]succinate + ADP + phosphate + 2 H(+). It functions in the pathway purine metabolism; IMP biosynthesis via de novo pathway; 5-amino-1-(5-phospho-D-ribosyl)imidazole-4-carboxamide from 5-amino-1-(5-phospho-D-ribosyl)imidazole-4-carboxylate: step 1/2. The polypeptide is Phosphoribosylaminoimidazole-succinocarboxamide synthase (Rickettsia felis (strain ATCC VR-1525 / URRWXCal2) (Rickettsia azadi)).